The following is a 154-amino-acid chain: Large ribosomal subunit protein bL19 (154 aa).

The disordered stretch occupies residues 1–33 (MAADPKDTTVTDENTETAATAEVETVASAPTSP). The span at 16–27 (ETAATAEVETVA) shows a compositional bias: low complexity.

It belongs to the bacterial ribosomal protein bL19 family.

In terms of biological role, this protein is located at the 30S-50S ribosomal subunit interface and may play a role in the structure and function of the aminoacyl-tRNA binding site. In Parasynechococcus marenigrum (strain WH8102), this protein is Large ribosomal subunit protein bL19.